Reading from the N-terminus, the 43-residue chain is Protein PsbN (43 aa).

The chain crosses the membrane as a helical span at residues 7-27; that stretch reads VAIFISGLLVSFTGYALYTAF.

Belongs to the PsbN family.

It localises to the plastid. It is found in the chloroplast thylakoid membrane. In terms of biological role, may play a role in photosystem I and II biogenesis. This Daucus carota (Wild carrot) protein is Protein PsbN.